The following is a 562-amino-acid chain: Endoglucanase E1 (562 aa).

A signal peptide spans 1–41 (MPRALRRVPGSRVMLRVGVVVAVLALVAALANLAVPRPARA). The catalytic stretch occupies residues 42–400 (AGGGYWHTSG…IKSSIFDPVG (359 aa)). Residues Cys-75 and Cys-161 are joined by a disulfide bond. The Proton donor role is filled by Glu-203. Cys-209 and Cys-212 are oxidised to a cystine. Glu-323 acts as the Nucleophile in catalysis. The segment at 399 to 462 (VGASASPSSQ…PTPSPTAASG (64 aa)) is disordered. 2 stretches are compositionally biased toward low complexity: residues 401-411 (ASASPSSQPSP) and 437-449 (PTPT…TPTP). A CBM2 domain is found at 458–562 (TAASGARCTA…AAPTVACAAS (105 aa)).

It belongs to the glycosyl hydrolase 5 (cellulase A) family.

It carries out the reaction Endohydrolysis of (1-&gt;4)-beta-D-glucosidic linkages in cellulose, lichenin and cereal beta-D-glucans.. Functionally, has a very high specific activity on carboxymethylcellulose. The protein is Endoglucanase E1 of Acidothermus cellulolyticus (strain ATCC 43068 / DSM 8971 / 11B).